Reading from the N-terminus, the 390-residue chain is Spore development regulator vosA (390 aa).

In terms of domain architecture, Velvet spans 3-132 (NNTSSDFDLI…ADQGVKLRIR (130 aa)). Residues 137-149 (TMLKRSTRPDEFH) are compositionally biased toward basic and acidic residues. Disordered regions lie at residues 137–191 (TMLK…PVKR) and 265–390 (QASA…GTPQ). Residues 165-175 (PPSSSYGGYPP) show a composition bias toward low complexity. The Nuclear localization signal signature appears at 273 to 280 (IPDPTGQS). Polar residues-rich tracts occupy residues 350–364 (QTPQ…SQMV) and 371–390 (SSVT…GTPQ).

It belongs to the velvet family. VosA subfamily. In terms of assembly, forms a heterodimeric complex with velB; the formation of the velB-vosA complex is light-dependent. Interacts with velA, velB and velC.

It localises to the nucleus. Its function is as follows. Component of the velB-VosA heterodimeric complex that plays a dual role in activating genes associated with spore maturation and repressing certain development-associated genes. The complex binds DNA through the DNA-binding domain of vosA that recognizes an 11-nucleotide consensus sequence 5'-CTGGCCGCGGC-3' consisting of two motifs in the promoters of key developmental regulatory genes. In Penicillium rubens (strain ATCC 28089 / DSM 1075 / NRRL 1951 / Wisconsin 54-1255) (Penicillium chrysogenum), this protein is Spore development regulator vosA.